Here is a 314-residue protein sequence, read N- to C-terminus: Deoxymugineic acid synthase 1-B (314 aa).

The interval 1–22 is disordered; sequence MGAGDKTAAGMPRIGMGTAVQG. Aspartate 44 is a binding site for NADP(+). The active-site Proton donor is tyrosine 49. Residue histidine 112 participates in substrate binding. NADP(+) contacts are provided by residues 158 to 159, glutamine 180, 258 to 266, and 273 to 281; these read AN, FDEARMREN, and ELTEEERRR.

The protein belongs to the aldo/keto reductase family. In terms of tissue distribution, mostly expressed in root tissues, observed in mesocotyl and embryonic roots, seedling roots, crown and seedling leafes, mature bracts, anthers, pistil, caryopsis and embryos.

It catalyses the reaction 2'-deoxymugineate + NAD(+) = 3''-deamino-3''-oxonicotianamine + NADH + H(+). The enzyme catalyses 2'-deoxymugineate + NADP(+) = 3''-deamino-3''-oxonicotianamine + NADPH + H(+). It participates in siderophore biosynthesis. In terms of biological role, catalyzes the reduction of a 3''-keto intermediate during the biosynthesis of 2'-deoxymugineic acid (DMA) from L-Met. Involved in the formation of phytosiderophores (MAs) belonging to the mugineic acid family and required to acquire iron. This chain is Deoxymugineic acid synthase 1-B, found in Triticum aestivum (Wheat).